The sequence spans 291 residues: Segregation and condensation protein A (291 aa).

The protein belongs to the ScpA family. As to quaternary structure, component of a cohesin-like complex composed of ScpA, ScpB and the Smc homodimer, in which ScpA and ScpB bind to the head domain of Smc. The presence of the three proteins is required for the association of the complex with DNA.

It localises to the cytoplasm. In terms of biological role, participates in chromosomal partition during cell division. May act via the formation of a condensin-like complex containing Smc and ScpB that pull DNA away from mid-cell into both cell halves. This is Segregation and condensation protein A from Malacoplasma penetrans (strain HF-2) (Mycoplasma penetrans).